The sequence spans 211 residues: 3-demethoxyubiquinol 3-hydroxylase (211 aa).

Residues Glu60, Glu90, His93, Glu142, Glu174, and His177 each contribute to the Fe cation site.

Belongs to the COQ7 family. It depends on Fe cation as a cofactor.

Its subcellular location is the cell membrane. It carries out the reaction a 5-methoxy-2-methyl-3-(all-trans-polyprenyl)benzene-1,4-diol + AH2 + O2 = a 3-demethylubiquinol + A + H2O. It functions in the pathway cofactor biosynthesis; ubiquinone biosynthesis. In terms of biological role, catalyzes the hydroxylation of 2-nonaprenyl-3-methyl-6-methoxy-1,4-benzoquinol during ubiquinone biosynthesis. This chain is 3-demethoxyubiquinol 3-hydroxylase, found in Francisella tularensis subsp. tularensis (strain FSC 198).